Consider the following 417-residue polypeptide: Imidazolonepropionase (417 aa).

H80 and H82 together coordinate Fe(3+). Zn(2+) contacts are provided by H80 and H82. Residues R89, Y152, and H187 each coordinate 4-imidazolone-5-propanoate. Y152 contributes to the N-formimidoyl-L-glutamate binding site. H252 is a Fe(3+) binding site. H252 is a binding site for Zn(2+). E255 is a binding site for 4-imidazolone-5-propanoate. Residue D326 participates in Fe(3+) binding. Zn(2+) is bound at residue D326. Residues N328 and G330 each coordinate N-formimidoyl-L-glutamate. 4-imidazolone-5-propanoate is bound at residue S331.

Belongs to the metallo-dependent hydrolases superfamily. HutI family. It depends on Zn(2+) as a cofactor. The cofactor is Fe(3+).

The protein resides in the cytoplasm. It carries out the reaction 4-imidazolone-5-propanoate + H2O = N-formimidoyl-L-glutamate. Its pathway is amino-acid degradation; L-histidine degradation into L-glutamate; N-formimidoyl-L-glutamate from L-histidine: step 3/3. Functionally, catalyzes the hydrolytic cleavage of the carbon-nitrogen bond in imidazolone-5-propanoate to yield N-formimidoyl-L-glutamate. It is the third step in the universal histidine degradation pathway. The sequence is that of Imidazolonepropionase from Bacteroides fragilis (strain ATCC 25285 / DSM 2151 / CCUG 4856 / JCM 11019 / LMG 10263 / NCTC 9343 / Onslow / VPI 2553 / EN-2).